Reading from the N-terminus, the 1188-residue chain is Integrin alpha-11 (1188 aa).

The signal sequence occupies residues 1–22; the sequence is MDLPRGLVVAWALSLWPGFTDT. The Extracellular portion of the chain corresponds to 23–1141; it reads FNMDTRKPRV…ISKQEDWQVP (1119 aa). FG-GAP repeat units lie at residues 24-85 and 91-151; these read NMDT…NCTK and VTLS…FSKT. An intrachain disulfide couples cysteine 76 to cysteine 83. 2 N-linked (GlcNAc...) asparagine glycosylation sites follow: asparagine 82 and asparagine 95. Cystine bridges form between cysteine 121-cysteine 139 and cysteine 129-cysteine 159. A VWFA domain is found at 164-345; that stretch reads DIVIVLDGSN…AALKDIVDAL (182 aa). Residues asparagine 291, asparagine 331, asparagine 358, asparagine 449, and asparagine 462 are each glycosylated (N-linked (GlcNAc...) asparagine). 5 FG-GAP repeats span residues 355 to 406, 411 to 461, 462 to 527, 528 to 586, and 590 to 650; these read TNKN…VIPL, LKEF…TMHN, NRSL…LFVY, NGTL…SILK, and QRIT…FEPS. Positions 488, 490, 492, and 496 each coordinate Ca(2+). N-linked (GlcNAc...) asparagine glycosylation occurs at asparagine 528. 8 residues coordinate Ca(2+): aspartate 551, asparagine 553, aspartate 555, aspartate 559, aspartate 613, asparagine 615, aspartate 617, and aspartate 621. Asparagine 642 carries N-linked (GlcNAc...) asparagine glycosylation. 3 cysteine pairs are disulfide-bonded: cysteine 659/cysteine 668, cysteine 674/cysteine 729, and cysteine 781/cysteine 787. N-linked (GlcNAc...) asparagine glycosylation occurs at asparagine 694. An N-linked (GlcNAc...) asparagine glycan is attached at asparagine 857. The cysteines at positions 881 and 893 are disulfide-linked. N-linked (GlcNAc...) asparagine glycosylation is found at asparagine 894, asparagine 973, asparagine 1031, asparagine 1039, and asparagine 1059. The chain crosses the membrane as a helical span at residues 1142–1164; it reads IWIIVGSTLGGLLLLALLVLALW. Residues 1165 to 1188 lie on the Cytoplasmic side of the membrane; sequence KLGFFRSARRRREPGLDPTPKVLE.

The protein belongs to the integrin alpha chain family. Heterodimer of an alpha and a beta subunit. Alpha-11 associates with beta-1. Interacts with RAB21. As to expression, according to PubMed:10464311, highest levels of expression in uterus and heart, intermediate levels in skeletal muscle and intermediate to low levels in pancreas, kidney and placenta. According to PubMed:10486209, also found in brain, colon, lung, small intestine, stomach, testis, salivary glands, thyroid glands and prostate. Very low levels in peripheral blood lymphocytes, fetal brain and fetal liver.

Its subcellular location is the membrane. Its function is as follows. Integrin alpha-11/beta-1 is a receptor for collagen. The polypeptide is Integrin alpha-11 (ITGA11) (Homo sapiens (Human)).